A 110-amino-acid polypeptide reads, in one-letter code: Integration host factor subunit beta (110 aa).

This sequence belongs to the bacterial histone-like protein family. Heterodimer of an alpha and a beta chain.

Its function is as follows. This protein is one of the two subunits of integration host factor, a specific DNA-binding protein that functions in genetic recombination as well as in transcriptional and translational control. This is Integration host factor subunit beta from Parvibaculum lavamentivorans (strain DS-1 / DSM 13023 / NCIMB 13966).